Consider the following 103-residue polypeptide: MHVKKGDKVQVITGKDKGKQGVILVAFPKENRVIVEGVNIVKKHSKPSQLNPQGGIITKEAPIHVSNVMPLDPKTGEPTRVGYKVEDGKKVRIAKKSGELLDK.

Belongs to the universal ribosomal protein uL24 family. In terms of assembly, part of the 50S ribosomal subunit.

Functionally, one of two assembly initiator proteins, it binds directly to the 5'-end of the 23S rRNA, where it nucleates assembly of the 50S subunit. In terms of biological role, one of the proteins that surrounds the polypeptide exit tunnel on the outside of the subunit. This chain is Large ribosomal subunit protein uL24, found in Bacillus cytotoxicus (strain DSM 22905 / CIP 110041 / 391-98 / NVH 391-98).